The primary structure comprises 293 residues: Formamidopyrimidine-DNA glycosylase (293 aa).

P2 (schiff-base intermediate with DNA) is an active-site residue. The active-site Proton donor is the E3. K58 functions as the Proton donor; for beta-elimination activity in the catalytic mechanism. 3 residues coordinate DNA: H104, R127, and R170. Residues 257-293 form an FPG-type zinc finger; the sequence is SVYGREGKPCRNPACGGTVERVVQSGRSTFFCASCQT. Residue R283 is the Proton donor; for delta-elimination activity of the active site.

Belongs to the FPG family. As to quaternary structure, monomer. Requires Zn(2+) as cofactor.

The enzyme catalyses Hydrolysis of DNA containing ring-opened 7-methylguanine residues, releasing 2,6-diamino-4-hydroxy-5-(N-methyl)formamidopyrimidine.. It catalyses the reaction 2'-deoxyribonucleotide-(2'-deoxyribose 5'-phosphate)-2'-deoxyribonucleotide-DNA = a 3'-end 2'-deoxyribonucleotide-(2,3-dehydro-2,3-deoxyribose 5'-phosphate)-DNA + a 5'-end 5'-phospho-2'-deoxyribonucleoside-DNA + H(+). Involved in base excision repair of DNA damaged by oxidation or by mutagenic agents. Acts as a DNA glycosylase that recognizes and removes damaged bases. Has a preference for oxidized purines, such as 7,8-dihydro-8-oxoguanine (8-oxoG). Has AP (apurinic/apyrimidinic) lyase activity and introduces nicks in the DNA strand. Cleaves the DNA backbone by beta-delta elimination to generate a single-strand break at the site of the removed base with both 3'- and 5'-phosphates. The chain is Formamidopyrimidine-DNA glycosylase from Brucella canis (strain ATCC 23365 / NCTC 10854 / RM-666).